The primary structure comprises 194 residues: Probable GTP-binding protein EngB (194 aa).

One can recognise an EngB-type G domain in the interval 22 to 194 (LFLEVAFAGR…WQELDTMLNP (173 aa)). Residues 30–37 (GRSNVGKS), 57–61 (GCTQL), 75–78 (DLPG), 142–145 (TKAD), and 173–175 (FSS) each bind GTP. Serine 37 and threonine 59 together coordinate Mg(2+).

Belongs to the TRAFAC class TrmE-Era-EngA-EngB-Septin-like GTPase superfamily. EngB GTPase family. Mg(2+) serves as cofactor.

Its function is as follows. Necessary for normal cell division and for the maintenance of normal septation. The polypeptide is Probable GTP-binding protein EngB (Desulforapulum autotrophicum (strain ATCC 43914 / DSM 3382 / VKM B-1955 / HRM2) (Desulfobacterium autotrophicum)).